We begin with the raw amino-acid sequence, 428 residues long: Maltoporin 1 (428 aa).

The first 25 residues, 1–25 (MTMKVKLLTTSVALALSMTAFSSNA), serve as a signal peptide directing secretion.

This sequence belongs to the porin LamB (TC 1.B.3) family. In terms of assembly, homotrimer formed of three 18-stranded antiparallel beta-barrels, containing three independent channels.

Its subcellular location is the cell outer membrane. The catalysed reaction is beta-maltose(in) = beta-maltose(out). Involved in the transport of maltose and maltodextrins. The sequence is that of Maltoporin 1 from Aeromonas salmonicida (strain A449).